Consider the following 376-residue polypeptide: MAELFNFEMTATDGKARTGVIHTPRGEIRTPAFMPVGTAATVKAMMPESVRATGADILLGNTYHLMLRPTAERIDRLGGLHKFMNWDRPILTDSGGFQVMSLAGLRKLTEKGVTFKSHIDGSRHELTPERSMEIQRLLGSDIVMCFDECPALPADRDRIAESMRLSMRWAERSREAFGDRPGHALFGIQQGGLEQDFREESAEALTKIGFDGYAVGGLAVGEGQEAMFGCLDYAPDMLPVDKPRYLMGVGKPDDIVGAVSRGIDMMDCVLPSRSGRTGQAFTRHGVVNIKNARHQDDPRPLDENCSCPACSNYSRAYLHHVFRSNEMISGMLLTWHNLHYFQDIMAGMRESIAAGTFEAWQKTFHETRAQGDIEPL.

The Proton acceptor role is filled by D93. Substrate is bound by residues D93–F97, D147, Q190, and G217. Positions G248–D254 are RNA binding. D267 (nucleophile) is an active-site residue. Residues C305, C307, C310, and H336 each contribute to the Zn(2+) site.

It belongs to the queuine tRNA-ribosyltransferase family. As to quaternary structure, homodimer. Within each dimer, one monomer is responsible for RNA recognition and catalysis, while the other monomer binds to the replacement base PreQ1. It depends on Zn(2+) as a cofactor.

The catalysed reaction is 7-aminomethyl-7-carbaguanine + guanosine(34) in tRNA = 7-aminomethyl-7-carbaguanosine(34) in tRNA + guanine. It participates in tRNA modification; tRNA-queuosine biosynthesis. Its function is as follows. Catalyzes the base-exchange of a guanine (G) residue with the queuine precursor 7-aminomethyl-7-deazaguanine (PreQ1) at position 34 (anticodon wobble position) in tRNAs with GU(N) anticodons (tRNA-Asp, -Asn, -His and -Tyr). Catalysis occurs through a double-displacement mechanism. The nucleophile active site attacks the C1' of nucleotide 34 to detach the guanine base from the RNA, forming a covalent enzyme-RNA intermediate. The proton acceptor active site deprotonates the incoming PreQ1, allowing a nucleophilic attack on the C1' of the ribose to form the product. After dissociation, two additional enzymatic reactions on the tRNA convert PreQ1 to queuine (Q), resulting in the hypermodified nucleoside queuosine (7-(((4,5-cis-dihydroxy-2-cyclopenten-1-yl)amino)methyl)-7-deazaguanosine). This is Queuine tRNA-ribosyltransferase from Ruegeria sp. (strain TM1040) (Silicibacter sp.).